The sequence spans 224 residues: C-reactive protein (224 aa).

Residues 1–18 form the signal peptide; it reads MEKLLCFLVLTSLSHAFG. Glutamine 19 carries the post-translational modification Pyrrolidone carboxylic acid. The Pentraxin (PTX) domain maps to 23–224; the sequence is SRKAFVFPKE…EVFTKPQLWP (202 aa). Residues cysteine 54 and cysteine 115 are joined by a disulfide bond. Residues aspartate 78, asparagine 79, glutamate 156, glutamine 157, aspartate 158, and glutamine 168 each contribute to the Ca(2+) site.

The protein belongs to the pentraxin family. As to quaternary structure, homopentamer. Pentraxin (or pentaxin) have a discoid arrangement of 5 non-covalently bound subunits. Interacts with FCN1; may regulate monocyte activation by FCN1. Requires Ca(2+) as cofactor. As to expression, found in plasma.

The protein resides in the secreted. Displays several functions associated with host defense: it promotes agglutination, bacterial capsular swelling, phagocytosis and complement fixation through its calcium-dependent binding to phosphorylcholine. Can interact with DNA and histones and may scavenge nuclear material released from damaged circulating cells. This chain is C-reactive protein (CRP), found in Homo sapiens (Human).